Reading from the N-terminus, the 146-residue chain is Leghemoglobin 1 (146 aa).

In terms of domain architecture, Globin spans 2-146 (GFTAQQDALV…LAAAIKKAMS (145 aa)). A phosphoserine; by CCAMK mark is found at Ser13 and Ser14. Nitrated tyrosine is present on Tyr30. Ser45 and Ser55 each carry phosphoserine; by CCAMK. Ser45 lines the heme b pocket. Position 61 (His61) interacts with O2. 3 residues coordinate heme b: Lys64, His93, and Lys96. The residue at position 123 (Ser123) is a Phosphoserine; by CCAMK. Tyr134 carries the nitrated tyrosine modification.

Belongs to the plant globin family. As to quaternary structure, monomer. Post-translationally, nitrated in effective nodules and particularly in hypoxic conditions; this mechanism may play a protective role in the symbiosis by buffering toxic peroxynitrite NO(2)(-). Nitration level decrease during nodule senescence. Phosphorylated by CCAMK at serine residues in a Ca(2+)-dependent manner; the phosphorylation at Ser-45 disrupts the molecular environment of its porphyrin ring oxygen binding pocket, thus leading to a reduced oxygen consumption and to the delivery of oxygen O(2) to symbiosomes. Specifically and strongly expressed in root nodules and at low levels in seedlings.

It localises to the cytoplasm. The protein resides in the cytosol. Its subcellular location is the nucleus. Leghemoglobin that reversibly binds oxygen O(2) through a pentacoordinated heme iron. In root nodules, facilitates the diffusion of oxygen to the bacteroids while preventing the bacterial nitrogenase from being inactivated by buffering dioxygen, nitric oxide and carbon monoxide, and promoting the formation of reactive oxygen species (ROS, e.g. H(2)O(2)). This role is essential for symbiotic nitrogen fixation (SNF). This is Leghemoglobin 1 from Lotus japonicus (Lotus corniculatus var. japonicus).